Here is a 262-residue protein sequence, read N- to C-terminus: Phosphatidylglycerol--prolipoprotein diacylglyceryl transferase (262 aa).

Helical transmembrane passes span 17 to 37 (LKVHWYGLMYVIGIAATWILA), 57 to 77 (LVFYAAIGVVVGGRLGYALFY), and 92 to 112 (IWEGGMAFHGGLIGVLIAMYA). Position 140 (arginine 140) interacts with a 1,2-diacyl-sn-glycero-3-phospho-(1'-sn-glycerol). 2 helical membrane-spanning segments follow: residues 200-220 (MAVSGLFLLGYGVFRFAVEFV) and 234-254 (WLTMGQILCLPMILFGIVLLA).

Belongs to the Lgt family.

The protein localises to the cell inner membrane. The enzyme catalyses L-cysteinyl-[prolipoprotein] + a 1,2-diacyl-sn-glycero-3-phospho-(1'-sn-glycerol) = an S-1,2-diacyl-sn-glyceryl-L-cysteinyl-[prolipoprotein] + sn-glycerol 1-phosphate + H(+). It participates in protein modification; lipoprotein biosynthesis (diacylglyceryl transfer). In terms of biological role, catalyzes the transfer of the diacylglyceryl group from phosphatidylglycerol to the sulfhydryl group of the N-terminal cysteine of a prolipoprotein, the first step in the formation of mature lipoproteins. The protein is Phosphatidylglycerol--prolipoprotein diacylglyceryl transferase of Methylococcus capsulatus (strain ATCC 33009 / NCIMB 11132 / Bath).